A 351-amino-acid chain; its full sequence is UDP-3-O-acylglucosamine N-acyltransferase (351 aa).

H240 functions as the Proton acceptor in the catalytic mechanism.

The protein belongs to the transferase hexapeptide repeat family. LpxD subfamily. In terms of assembly, homotrimer.

The catalysed reaction is a UDP-3-O-[(3R)-3-hydroxyacyl]-alpha-D-glucosamine + a (3R)-hydroxyacyl-[ACP] = a UDP-2-N,3-O-bis[(3R)-3-hydroxyacyl]-alpha-D-glucosamine + holo-[ACP] + H(+). Its pathway is bacterial outer membrane biogenesis; LPS lipid A biosynthesis. In terms of biological role, catalyzes the N-acylation of UDP-3-O-acylglucosamine using 3-hydroxyacyl-ACP as the acyl donor. Is involved in the biosynthesis of lipid A, a phosphorylated glycolipid that anchors the lipopolysaccharide to the outer membrane of the cell. The polypeptide is UDP-3-O-acylglucosamine N-acyltransferase (Pseudomonas putida (strain ATCC 47054 / DSM 6125 / CFBP 8728 / NCIMB 11950 / KT2440)).